The primary structure comprises 156 residues: 6,7-dimethyl-8-ribityllumazine synthase (156 aa).

5-amino-6-(D-ribitylamino)uracil-binding positions include phenylalanine 23, 57 to 59 (SFE), and 81 to 83 (AVI). 86–87 (GT) is a binding site for (2S)-2-hydroxy-3-oxobutyl phosphate. The Proton donor role is filled by histidine 89. Phenylalanine 114 serves as a coordination point for 5-amino-6-(D-ribitylamino)uracil. Arginine 128 provides a ligand contact to (2S)-2-hydroxy-3-oxobutyl phosphate.

The protein belongs to the DMRL synthase family. As to quaternary structure, forms an icosahedral capsid composed of 60 subunits, arranged as a dodecamer of pentamers.

It carries out the reaction (2S)-2-hydroxy-3-oxobutyl phosphate + 5-amino-6-(D-ribitylamino)uracil = 6,7-dimethyl-8-(1-D-ribityl)lumazine + phosphate + 2 H2O + H(+). The protein operates within cofactor biosynthesis; riboflavin biosynthesis; riboflavin from 2-hydroxy-3-oxobutyl phosphate and 5-amino-6-(D-ribitylamino)uracil: step 1/2. Catalyzes the formation of 6,7-dimethyl-8-ribityllumazine by condensation of 5-amino-6-(D-ribitylamino)uracil with 3,4-dihydroxy-2-butanone 4-phosphate. This is the penultimate step in the biosynthesis of riboflavin. This is 6,7-dimethyl-8-ribityllumazine synthase from Alkalilimnicola ehrlichii (strain ATCC BAA-1101 / DSM 17681 / MLHE-1).